The primary structure comprises 47 residues: Glyceraldehyde-3-phosphate dehydrogenase, cytosolic (47 aa).

The protein belongs to the glyceraldehyde-3-phosphate dehydrogenase family. As to quaternary structure, homotetramer.

The protein resides in the cytoplasm. The catalysed reaction is D-glyceraldehyde 3-phosphate + phosphate + NAD(+) = (2R)-3-phospho-glyceroyl phosphate + NADH + H(+). It functions in the pathway carbohydrate degradation; glycolysis; pyruvate from D-glyceraldehyde 3-phosphate: step 1/5. In Pseudotsuga menziesii (Douglas-fir), this protein is Glyceraldehyde-3-phosphate dehydrogenase, cytosolic.